We begin with the raw amino-acid sequence, 1507 residues long: DDB1- and CUL4-associated factor 1 (1507 aa).

The protein kinase-like stretch occupies residues 141-500 (QPLRTYSTGL…STLEILNLED (360 aa)). Phosphoserine is present on residues Ser202 and Ser255. The interval 242–288 (HLDSGHKTSSRVNSTTKPEDGGLKKNKSAKQGDRENFRKAKQKLGFS) is disordered. One can recognise a Chromo domain in the interval 562–593 (SYTHEQIVEMMEFLIEYGPAQLYWEPAEVFLK). N6-acetyllysine is present on Lys701. Ser828 carries the phosphoserine modification. In terms of domain architecture, LisH spans 846 to 878 (PEKELLLLIRNHLISKGLGETATVLTKEADLPM). Phosphothreonine is present on Thr888. A phosphoserine mark is found at Ser895 and Ser898. The tract at residues 917–947 (AAVGASAPSAPTAHPQPRPPQGPLALPGPSY) is disordered. Phosphoserine is present on residues Ser979 and Ser1000. 5 WD repeats span residues 1091 to 1130 (EDES…EEAS), 1133 to 1174 (CHNS…DMKH), 1176 to 1213 (FTED…KLLT), 1215 to 1247 (FNPD…WDVR), and 1248 to 1290 (SAQA…LLHT). Residues 1091 to 1290 (EDESGFTCCA…DLRTFHLLHT (200 aa)) form a WD repeat-like region region. 2 consecutive short sequence motifs (DWD box) follow at residues 1242-1249 (VLWDVRSA) and 1278-1285 (EIWDLRTF). Phosphoserine is present on Ser1328. Residues 1393 to 1507 (RLAEDEDEEE…EDDIILSLNE (115 aa)) form a disordered region. 2 stretches are compositionally biased toward acidic residues: residues 1396 to 1483 (EDED…EEVE) and 1490 to 1501 (DSSDNSDLEDDI). An interaction with NF2 region spans residues 1418–1507 (DDDTDDLDEL…EDDIILSLNE (90 aa)).

The protein belongs to the VPRBP/DCAF1 family. In terms of assembly, component of the DCX (DDB1-CUL4-X-box) E3 ubiquitin-protein ligase complex, named CUL4A-RBX1-DDB1-DCAF1/VPRBP complex. Interacts with DDB1; the interaction is direct. Also forms a ternary complex with DDA1 and DDB1. Interacts with NF2 (via FERM domain). Component of the EDVP complex, a E3 ligase complex containing DYRK2, EDD/UBR5, DDB1 and DCAF1. Interacts with DYRK2; the interaction is direct. Interacts with RAG1; the interaction is direct. Interacts with LLGL1 and LLGL2. Interacts with histone H3. Interacts with ESR1 and LATS1; probably recruited by LATS1 to promote ESR1 ubiquitination and ubiquitin-mediated proteasomal degradation. Directly interacts with TET1, TET2 and TET3 (via C-terminus). Interacts with CEP78; promoting DCAF1 localization to centrosomes. (Microbial infection) Interacts with HIV-1 virus Vpr protein; the interaction is direct. As to quaternary structure, (Microbial infection) Interacts with HIV-2 virus Vpx protein; the interaction is direct and the complex recruits SAMHD1 to promote its ubiquitin-dependent proteasomal degradation. In terms of assembly, (Microbial infection) Interacts (via C-terminus) with human cytomegalovirus protein UL35; this interaction induces the accumulation of cells in the G2 phase of the cell cycle. In terms of tissue distribution, ubiquitously expressed.

Its subcellular location is the cytoplasm. The protein localises to the nucleus. It localises to the cytoskeleton. The protein resides in the microtubule organizing center. It is found in the centrosome. It carries out the reaction L-seryl-[protein] + ATP = O-phospho-L-seryl-[protein] + ADP + H(+). It catalyses the reaction L-threonyl-[protein] + ATP = O-phospho-L-threonyl-[protein] + ADP + H(+). It participates in protein modification; protein ubiquitination. Its function is as follows. Acts both as a substrate recognition component of E3 ubiquitin-protein ligase complexes and as an atypical serine/threonine-protein kinase, playing key roles in various processes such as cell cycle, telomerase regulation and histone modification. Probable substrate-specific adapter of a DCX (DDB1-CUL4-X-box) E3 ubiquitin-protein ligase complex, named CUL4A-RBX1-DDB1-DCAF1/VPRBP complex, which mediates ubiquitination and proteasome-dependent degradation of proteins such as NF2. Involved in the turnover of methylated proteins: recognizes and binds methylated proteins via its chromo domain, leading to ubiquitination of target proteins by the RBX1-DDB1-DCAF1/VPRBP complex. The CUL4A-RBX1-DDB1-DCAF1/VPRBP complex is also involved in B-cell development: DCAF1 is recruited by RAG1 to ubiquitinate proteins, leading to limit error-prone repair during V(D)J recombination. Also part of the EDVP complex, an E3 ligase complex that mediates ubiquitination of proteins such as TERT, leading to TERT degradation and telomerase inhibition. The EDVP complex also mediates ubiquitination and degradation of CCP110. Also acts as an atypical serine/threonine-protein kinase that specifically mediates phosphorylation of 'Thr-120' of histone H2A (H2AT120ph) in a nucleosomal context, thereby repressing transcription. H2AT120ph is present in the regulatory region of many tumor suppresor genes, down-regulates their transcription and is present at high level in a number of tumors. Involved in JNK-mediated apoptosis during cell competition process via its interaction with LLGL1 and LLGL2. By acting on TET dioxygenses, essential for oocyte maintenance at the primordial follicle stage, hence essential for female fertility. In terms of biological role, (Microbial infection) In case of infection by HIV-1 virus, it is recruited by HIV-1 Vpr in order to hijack the CUL4A-RBX1-DDB1-DCAF1/VPRBP function leading to arrest the cell cycle in G2 phase, and also to protect the viral protein from proteasomal degradation by another E3 ubiquitin ligase. The HIV-1 Vpr protein hijacks the CUL4A-RBX1-DDB1-DCAF1/VPRBP complex to promote ubiquitination and degradation of proteins such as TERT and ZIP/ZGPAT. Functionally, (Microbial infection) In case of infection by HIV-2 virus, it is recruited by HIV-2 Vpx in order to hijack the CUL4A-RBX1-DDB1-DCAF1/VPRBP function leading to enhanced efficiency of macrophage infection and promotion of the replication of cognate primate lentiviruses in cells of monocyte/macrophage lineage. The sequence is that of DDB1- and CUL4-associated factor 1 from Homo sapiens (Human).